Reading from the N-terminus, the 119-residue chain is Large ribosomal subunit protein uL18 (119 aa).

The protein belongs to the universal ribosomal protein uL18 family. In terms of assembly, part of the 50S ribosomal subunit; part of the 5S rRNA/L5/L18/L25 subcomplex. Contacts the 5S and 23S rRNAs.

Its function is as follows. This is one of the proteins that bind and probably mediate the attachment of the 5S RNA into the large ribosomal subunit, where it forms part of the central protuberance. In Chelativorans sp. (strain BNC1), this protein is Large ribosomal subunit protein uL18.